Here is a 1323-residue protein sequence, read N- to C-terminus: Lysine-specific demethylase 3A (1323 aa).

Disordered regions lie at residues 255-287 (TRTGAVKRKSSENNGSSVSKQAKSCSEASPSMC), 307-337 (ATPSSKDPRQQNTPQAANSPPNIGAKLPQGC), and 385-416 (SEPKGSCIQPKTNTDQESRLESAPQPVTGLPK). Phosphoserine is present on Ser264. 2 stretches are compositionally biased toward polar residues: residues 266–283 (ENNGSSVSKQAKSCSEAS) and 307–327 (ATPSSKDPRQQNTPQAANSPP). A Phosphoserine modification is found at Ser325. At Ser446 the chain carries Phosphoserine. Disordered regions lie at residues 468–487 (AEKKVEPSHLGSQSQNLKET) and 495–517 (SCCTRSSNKTQTPPARKSVLTDP). 2 stretches are compositionally biased toward polar residues: residues 477 to 486 (LGSQSQNLKE) and 495 to 507 (SCCTRSSNKTQTP). The C6-type zinc-finger motif lies at 662–687 (CDVCDTTIFNLHWVCPRCGFGVCVDC). The LXXLL motif motif lies at 885 to 889 (LRNLL). Lys895 is subject to N6-acetyllysine. The JmjC domain maps to 1060–1283 (MPSRFDDLMA…HCFWLTQEFR (224 aa)). His1122, Asp1124, and His1251 together coordinate Fe cation.

Belongs to the JHDM2 histone demethylase family. In terms of assembly, interacts with VRK1. Requires Fe(2+) as cofactor. As to expression, highly expressed in testis (at protein level). Also expressed at high levels in tissues responsive to sympathetic nerve activity such as brown adipose tissue and skeletal muscle.

Its subcellular location is the cytoplasm. It is found in the nucleus. It catalyses the reaction N(6),N(6)-dimethyl-L-lysyl(9)-[histone H3] + 2 2-oxoglutarate + 2 O2 = L-lysyl(9)-[histone H3] + 2 formaldehyde + 2 succinate + 2 CO2. Histone demethylase that specifically demethylates 'Lys-9' of histone H3, thereby playing a central role in histone code. Preferentially demethylates mono- and dimethylated H3 'Lys-9' residue, with a preference for dimethylated residue, while it has weak or no activity on trimethylated H3 'Lys-9'. Demethylation of Lys residue generates formaldehyde and succinate. Involved in hormone-dependent transcriptional activation, by participating in recruitment to androgen-receptor target genes, resulting in H3 'Lys-9' demethylation and transcriptional activation. Involved in spermatogenesis by regulating expression of target genes such as PRM1 and TNP1 which are required for packaging and condensation of sperm chromatin. Involved in obesity resistance through regulation of metabolic genes such as PPARA and UCP1. This is Lysine-specific demethylase 3A (Kdm3a) from Mus musculus (Mouse).